Reading from the N-terminus, the 78-residue chain is MAKFATQLFLLTASVVMLEVQSSIVIMQDPDLGRKLIMNPANGASCGETCFTGICFTAGCSCNPWPTCTRNGLNPESI.

An N-terminal signal peptide occupies residues 1–23 (MAKFATQLFLLTASVVMLEVQSS). Positions 24–42 (IVIMQDPDLGRKLIMNPAN) are cleaved as a propeptide — removed in mature form. The segment at residues 43 to 71 (GASCGETCFTGICFTAGCSCNPWPTCTRN) is a cross-link (cyclopeptide (Gly-Asn)). 3 disulfide bridges follow: C46–C60, C50–C62, and C55–C68. A propeptide spans 72 to 78 (GLNPESI) (removed in mature form).

This is a cyclic peptide.

Its function is as follows. Probably participates in a plant defense mechanism. The chain is Chassatide C4 from Chassalia chartacea (Chassalia curviflora).